A 545-amino-acid chain; its full sequence is Probable bifunctional tRNA threonylcarbamoyladenosine biosynthesis protein (545 aa).

The kae1 stretch occupies residues 1 to 329 (MKNTFILGIE…YRTDDVKVTW (329 aa)). Fe cation is bound by residues His113, His117, and Tyr134. Residues 134-138 (YVSGA), Asp166, Gly179, Glu183, and Asn262 contribute to the L-threonylcarbamoyladenylate site. Fe cation is bound at residue Asp290. Positions 340–545 (EISPGTSLKL…EEIKKRARYA (206 aa)) constitute a Protein kinase domain. ATP is bound by residues 353–361 (LDNGAEAIV) and Lys375. Catalysis depends on Asp462, which acts as the Proton acceptor; for kinase activity.

It in the N-terminal section; belongs to the KAE1 / TsaD family. This sequence in the C-terminal section; belongs to the protein kinase superfamily. Tyr protein kinase family. BUD32 subfamily. In terms of assembly, component of the KEOPS complex that consists of Kae1, Bud32, Cgi121 and Pcc1; the whole complex dimerizes. The cofactor is Fe(2+).

Its subcellular location is the cytoplasm. It carries out the reaction L-seryl-[protein] + ATP = O-phospho-L-seryl-[protein] + ADP + H(+). It catalyses the reaction L-threonyl-[protein] + ATP = O-phospho-L-threonyl-[protein] + ADP + H(+). The enzyme catalyses L-threonylcarbamoyladenylate + adenosine(37) in tRNA = N(6)-L-threonylcarbamoyladenosine(37) in tRNA + AMP + H(+). Its function is as follows. Required for the formation of a threonylcarbamoyl group on adenosine at position 37 (t(6)A37) in tRNAs that read codons beginning with adenine. Is a component of the KEOPS complex that is probably involved in the transfer of the threonylcarbamoyl moiety of threonylcarbamoyl-AMP (TC-AMP) to the N6 group of A37. The Kae1 domain likely plays a direct catalytic role in this reaction. The Bud32 domain probably displays kinase activity that regulates Kae1 function. In Methanosarcina barkeri (strain Fusaro / DSM 804), this protein is Probable bifunctional tRNA threonylcarbamoyladenosine biosynthesis protein.